The following is a 650-amino-acid chain: Chaperone protein HtpG (650 aa).

The interval 1 to 344 (MSKHTHSFQA…SADLPLNVSR (344 aa)) is a; substrate-binding. The tract at residues 345–582 (ELLQESRDVR…DGGMSTQLAR (238 aa)) is b. Residues 583 to 650 (LLKQAGQSAP…YVKRVNALLA (68 aa)) form a c region.

It belongs to the heat shock protein 90 family. In terms of assembly, homodimer.

The protein resides in the cytoplasm. Its function is as follows. Molecular chaperone. Has ATPase activity. This Acidovorax sp. (strain JS42) protein is Chaperone protein HtpG.